The chain runs to 585 residues: Arginine--tRNA ligase (585 aa).

The 'HIGH' region motif lies at 131–141 (ANPTGPMHVGH).

Belongs to the class-I aminoacyl-tRNA synthetase family. In terms of assembly, monomer.

It is found in the cytoplasm. The catalysed reaction is tRNA(Arg) + L-arginine + ATP = L-arginyl-tRNA(Arg) + AMP + diphosphate. The sequence is that of Arginine--tRNA ligase from Rhizobium leguminosarum bv. trifolii (strain WSM2304).